We begin with the raw amino-acid sequence, 177 residues long: Ubiquinol-cytochrome c reductase iron-sulfur subunit (177 aa).

The chain crosses the membrane as a helical span at residues 18-38 (MVLTASSVAAIGAVCTLWPLV). Residues 88–175 (ARAVKMSELI…YTFISDKKIR (88 aa)) form the Rieske domain. Positions 120, 122, 139, and 142 each coordinate [2Fe-2S] cluster. An intrachain disulfide couples Cys125 to Cys141.

The protein belongs to the Rieske iron-sulfur protein family. In terms of assembly, the main subunits of complex b-c1 are: cytochrome b, cytochrome c1 and the Rieske protein. The cofactor is [2Fe-2S] cluster.

The protein resides in the cell membrane. It catalyses the reaction a quinol + 2 Fe(III)-[cytochrome c](out) = a quinone + 2 Fe(II)-[cytochrome c](out) + 2 H(+)(out). In terms of biological role, component of the ubiquinol-cytochrome c reductase complex (complex III or cytochrome b-c1 complex), which is a respiratory chain that generates an electrochemical potential coupled to ATP synthesis. The chain is Ubiquinol-cytochrome c reductase iron-sulfur subunit (petA) from Rickettsia conorii (strain ATCC VR-613 / Malish 7).